The following is a 235-amino-acid chain: MDAPINPSSPTRSSYETALERQWLIKDEPSHHVDLGCHFTLEIKAFSPKMIELLETGSLTLGSVYQGLYNLIKDKDCKGLELDRDTTHGNKLHVLAAAFLCVLRKYENQVRFYNVKTKDSLTGEIQYMSRVHIGDDNLGLFDPDTYRMIGGSFPEGIYRLNLRTQLTPRGEDDGLEIIMGTILTVPVRGPADRQPLGVLMDRQLRQFPVGTNPWSSLGEAKPKGRSLSLLRGILM.

This sequence belongs to the nucleorhabdovirus type-2 matrix protein family. As to quaternary structure, homomultimer. Interacts with nucleoprotein and with the cytoplasmic domain of glycoprotein.

Its subcellular location is the virion membrane. The protein localises to the host endomembrane system. Functionally, plays a major role in assembly and budding of virion. Completely covers the ribonucleoprotein coil and keep it in condensed bullet-shaped form. Inhibits viral transcription and stimulates replication. The polypeptide is Matrix protein (M) (Rottboellia (Sorghum)).